The chain runs to 491 residues: Lysine--tRNA ligase (491 aa).

Positions 400 and 407 each coordinate Mg(2+).

It belongs to the class-II aminoacyl-tRNA synthetase family. Homodimer. It depends on Mg(2+) as a cofactor.

Its subcellular location is the cytoplasm. It carries out the reaction tRNA(Lys) + L-lysine + ATP = L-lysyl-tRNA(Lys) + AMP + diphosphate. The polypeptide is Lysine--tRNA ligase (Mesomycoplasma hyopneumoniae (strain J / ATCC 25934 / NCTC 10110) (Mycoplasma hyopneumoniae)).